A 229-amino-acid chain; its full sequence is 2,3-bisphosphoglycerate-dependent phosphoglycerate mutase (229 aa).

Substrate-binding positions include 7–14 (RHGQSEWN), 20–21 (TG), arginine 59, 86–89 (ERHY), lysine 97, 113–114 (RR), and 182–183 (GN). Catalysis depends on histidine 8, which acts as the Tele-phosphohistidine intermediate. Glutamate 86 acts as the Proton donor/acceptor in catalysis.

The protein belongs to the phosphoglycerate mutase family. BPG-dependent PGAM subfamily.

It carries out the reaction (2R)-2-phosphoglycerate = (2R)-3-phosphoglycerate. It functions in the pathway carbohydrate degradation; glycolysis; pyruvate from D-glyceraldehyde 3-phosphate: step 3/5. Functionally, catalyzes the interconversion of 2-phosphoglycerate and 3-phosphoglycerate. In Listeria welshimeri serovar 6b (strain ATCC 35897 / DSM 20650 / CCUG 15529 / CIP 8149 / NCTC 11857 / SLCC 5334 / V8), this protein is 2,3-bisphosphoglycerate-dependent phosphoglycerate mutase.